The following is a 299-amino-acid chain: Methionyl-tRNA formyltransferase (299 aa).

109 to 112 (SLLP) contacts (6S)-5,6,7,8-tetrahydrofolate.

Belongs to the Fmt family.

The catalysed reaction is L-methionyl-tRNA(fMet) + (6R)-10-formyltetrahydrofolate = N-formyl-L-methionyl-tRNA(fMet) + (6S)-5,6,7,8-tetrahydrofolate + H(+). Attaches a formyl group to the free amino group of methionyl-tRNA(fMet). The formyl group appears to play a dual role in the initiator identity of N-formylmethionyl-tRNA by promoting its recognition by IF2 and preventing the misappropriation of this tRNA by the elongation apparatus. This is Methionyl-tRNA formyltransferase from Wolbachia sp. subsp. Drosophila simulans (strain wRi).